Here is a 547-residue protein sequence, read N- to C-terminus: Chaperonin GroEL (547 aa).

ATP-binding positions include 30-33, Lys51, 87-91, Gly415, 480-482, and Asp496; these read TLGP, DGTTT, and NAA.

This sequence belongs to the chaperonin (HSP60) family. Forms a cylinder of 14 subunits composed of two heptameric rings stacked back-to-back. Interacts with the co-chaperonin GroES.

Its subcellular location is the cytoplasm. The catalysed reaction is ATP + H2O + a folded polypeptide = ADP + phosphate + an unfolded polypeptide.. Together with its co-chaperonin GroES, plays an essential role in assisting protein folding. The GroEL-GroES system forms a nano-cage that allows encapsulation of the non-native substrate proteins and provides a physical environment optimized to promote and accelerate protein folding. The protein is Chaperonin GroEL of Glaesserella parasuis serovar 5 (strain SH0165) (Haemophilus parasuis).